A 135-amino-acid chain; its full sequence is Small ribosomal subunit protein uS11 (135 aa).

The protein belongs to the universal ribosomal protein uS11 family. As to quaternary structure, part of the 30S ribosomal subunit. Interacts with proteins S7 and S18. Binds to IF-3.

In terms of biological role, located on the platform of the 30S subunit, it bridges several disparate RNA helices of the 16S rRNA. Forms part of the Shine-Dalgarno cleft in the 70S ribosome. This is Small ribosomal subunit protein uS11 from Polynucleobacter necessarius subsp. necessarius (strain STIR1).